The primary structure comprises 66 residues: Large ribosomal subunit protein bL32 (66 aa).

This sequence belongs to the bacterial ribosomal protein bL32 family.

This Acetivibrio thermocellus (strain ATCC 27405 / DSM 1237 / JCM 9322 / NBRC 103400 / NCIMB 10682 / NRRL B-4536 / VPI 7372) (Clostridium thermocellum) protein is Large ribosomal subunit protein bL32.